The sequence spans 90 residues: Barrier-to-autointegration factor (90 aa).

2 positions are modified to phosphoserine: S2 and S3. Phosphothreonine is present on T4. The residue at position 5 (S5) is a Phosphoserine.

It belongs to the BAF family. As to quaternary structure, homodimer.

It localises to the nucleus. The protein localises to the chromosome. The protein resides in the nucleus envelope. Its subcellular location is the cytoplasm. Functionally, non-specific DNA-binding protein that plays key roles in mitotic nuclear reassembly, chromatin organization, DNA damage response, gene expression and intrinsic immunity against foreign DNA. Contains two non-specific double-stranded DNA (dsDNA)-binding sites which promote DNA cross-bridging. Plays a key role in nuclear membrane reformation at the end of mitosis by driving formation of a single nucleus in a spindle-independent manner. Transiently cross-bridges anaphase chromosomes via its ability to bridge distant DNA sites, leading to the formation of a dense chromatin network at the chromosome ensemble surface that limits membranes to the surface. Also acts as a negative regulator of innate immune activation by restricting CGAS activity toward self-DNA upon acute loss of nuclear membrane integrity. Outcompetes CGAS for DNA-binding, thereby preventing CGAS activation and subsequent damaging autoinflammatory responses. Also involved in DNA damage response; acts by inhibiting the ADP-ribosyltransferase activity of PARP1. Involved in the recognition of exogenous dsDNA in the cytosol: associates with exogenous dsDNA immediately after its appearance in the cytosol at endosome breakdown and is required to avoid autophagy. This is Barrier-to-autointegration factor (banf1) from Danio rerio (Zebrafish).